A 446-amino-acid chain; its full sequence is Methanogenesis regulatory protein FilR1 (446 aa).

The Response regulatory domain occupies 297 to 416 (DVMIVEDDLG…QRLPEIAEEA (120 aa)). D350 carries the post-translational modification 4-aspartylphosphate.

Phosphorylated by FilI.

Functionally, member of the two-component regulatory system FilI/FilRs, which is involved in the regulation of methanogenesis. Regulates its own expression, expression of the filI-filR2 operon, and of genes involved in methanogenesis such as acs1, acs4 and mtrABC. Acts by binding to the promoters. The chain is Methanogenesis regulatory protein FilR1 from Methanothrix harundinacea (strain 6Ac) (Methanosaeta harundinacea).